Reading from the N-terminus, the 876-residue chain is MKKLKASEIRQKYLDFFVEKGHMVEPSAPLVPIDDDTLLWINSGVATLKKYFDGRETPKKPRIVNSQKAIRTNDIENVGFTARHHTFFEMLGNFSIGDYFKQEAIEFAWEFLTSDKWMGMEPDKLYVTIHPEDMEAYNIWHKDIGLEESRIIRIEGNFWDIGEGPSGPNTEIFYDRGEAYGQDDPAEEMYPGGENERYLEVWNLVFSEFNHNKDHSYTPLPNKNIDTGMGLERMASVSQNVRTNYETDLFMPIMNEIEKVSGKQYLVNNEQDVAFKVIADHIRTIAFAISDGALPANEGRGYVLRRLLRRAVRFSQTLGINEPFMYKLVDIVADIMEPYYPNVKEKADFIKRVIKSEEERFHETLEDGLAILNELIKKAKATTNEINGKDAFKLYDTYGFPIELTEEIAVQAGLKVDMTTFESEMQQQRDRARQARQNSQSMQVQSEVLKNITSASTFVGYDTATAQTTLTHLIYNGEEVSQVEAGETVYFMLTETPFYAVSGGQVADTGIVYNDNFEIAVSEVTKAPNGQNLHKGVVQFGQVNVGATVSAEVNQNDRRDIQKNHSATHLLHAALKSVLGDHVNQAGSLVEADRLRFDFSHFGPMTNDEIDQVERLVNEEIWKGIDVNIQEMDIVSAKEMGAMALFGEKYGDVVRVVNMAPFSIELCGGIHVRNTSEIGLFKIVSESGTGAGVRRIEALTGKAAFLYLEDIQEKFNTMKSQLKVKSDNQVVDKLTQLQDEEKALLKQLEQRDKEITSLKMGNIEDQVEEINGYKVLVTEVDVPNAKAIRSTMDDFKSKLQDTIIILASNVDDKVSMVATVPKSLTNNVKAGDLIKQMAPIVGGKGGGRPDMAQGGGTQPENISKSLSFIKDYIKNL.

Positions 565, 569, 667, and 671 each coordinate Zn(2+).

It belongs to the class-II aminoacyl-tRNA synthetase family. Zn(2+) serves as cofactor.

It is found in the cytoplasm. The catalysed reaction is tRNA(Ala) + L-alanine + ATP = L-alanyl-tRNA(Ala) + AMP + diphosphate. In terms of biological role, catalyzes the attachment of alanine to tRNA(Ala) in a two-step reaction: alanine is first activated by ATP to form Ala-AMP and then transferred to the acceptor end of tRNA(Ala). Also edits incorrectly charged Ser-tRNA(Ala) and Gly-tRNA(Ala) via its editing domain. The protein is Alanine--tRNA ligase of Staphylococcus aureus (strain MRSA252).